A 130-amino-acid polypeptide reads, in one-letter code: Small ribosomal subunit protein uS8 (130 aa).

The protein belongs to the universal ribosomal protein uS8 family. In terms of assembly, part of the 30S ribosomal subunit.

In terms of biological role, one of the primary rRNA binding proteins, it binds directly to 16S rRNA central domain where it helps coordinate assembly of the platform of the 30S subunit. This chain is Small ribosomal subunit protein uS8, found in Methanococcus aeolicus (strain ATCC BAA-1280 / DSM 17508 / OCM 812 / Nankai-3).